A 347-amino-acid polypeptide reads, in one-letter code: Phenylalanine--tRNA ligase alpha subunit (347 aa).

E265 is a Mg(2+) binding site.

The protein belongs to the class-II aminoacyl-tRNA synthetase family. Phe-tRNA synthetase alpha subunit type 1 subfamily. In terms of assembly, tetramer of two alpha and two beta subunits. The cofactor is Mg(2+).

It is found in the cytoplasm. The catalysed reaction is tRNA(Phe) + L-phenylalanine + ATP = L-phenylalanyl-tRNA(Phe) + AMP + diphosphate + H(+). The protein is Phenylalanine--tRNA ligase alpha subunit of Wolbachia sp. subsp. Drosophila simulans (strain wRi).